The sequence spans 336 residues: 25S rRNA (uridine(2634)-N(3))-methyltransferase (336 aa).

Residues 286 to 307 (PGYHHRRTNSEQDTTKPAKERD) form a disordered region. Over residues 293–307 (TNSEQDTTKPAKERD) the composition is skewed to basic and acidic residues.

This sequence belongs to the class I-like SAM-binding methyltransferase superfamily. BMT5 family.

It localises to the nucleus. The protein resides in the nucleolus. The enzyme catalyses uridine(2634) in 25S rRNA + S-adenosyl-L-methionine = N(3)-methyluridine(2634) in 25S rRNA + S-adenosyl-L-homocysteine + H(+). S-adenosyl-L-methionine-dependent methyltransferase that specifically methylates the N(3) position of uridine 2634 (m3U2634) in 25S rRNA. The sequence is that of 25S rRNA (uridine(2634)-N(3))-methyltransferase (BMT5) from Saccharomyces cerevisiae (strain ATCC 204508 / S288c) (Baker's yeast).